We begin with the raw amino-acid sequence, 69 residues long: Cold shock-like protein CspC (69 aa).

In terms of domain architecture, CSD spans 6–66 (GQVKWFNESK…GQKGPAAVNV (61 aa)).

Its subcellular location is the cytoplasm. This is Cold shock-like protein CspC (cspC) from Escherichia coli O157:H7.